The following is a 262-amino-acid chain: Serine/arginine-rich SC35-like splicing factor SCL30 (262 aa).

Residues Met1–Arg14 are compositionally biased toward low complexity. Disordered stretches follow at residues Met1–Ser48 and Ala123–Arg262. Phosphoserine occurs at positions 5, 10, and 22. Over residues Gly31–Arg42 the composition is skewed to gly residues. Residues Gly47–Glu125 form the RRM domain. Basic and acidic residues predominate over residues Glu125–His152. The segment covering Gly153–Arg167 has biased composition (basic residues). 3 positions are modified to phosphoserine: Ser182, Ser204, and Ser206. Residue Tyr209 is modified to Phosphotyrosine. The span at Pro217–Arg239 shows a compositional bias: basic and acidic residues. Positions Arg243–Arg262 are enriched in low complexity. Phosphoserine is present on residues Ser254, Ser256, and Ser260.

Belongs to the splicing factor SR family. SCL subfamily. As to quaternary structure, component of the spliceosome. Interacts with RS2Z33, CYP59, CYP63 and CYP95. Phosphorylated.

It is found in the nucleus speckle. Involved in intron recognition and spliceosome assembly. Probably active at the 5' splice sites. The sequence is that of Serine/arginine-rich SC35-like splicing factor SCL30 (SCL30) from Arabidopsis thaliana (Mouse-ear cress).